A 687-amino-acid polypeptide reads, in one-letter code: MSVRYPLLNRELGILGFNERVLAQAADPQVPLLERLRFICITSSNLDEFFEVRMAGLQEQIRDNPGAMTPDGMSLQHAYDLVVERAQRLVHRQYTMLHETVLPALEQEGIYFHNSDSWSDAQLEWARRYFLDELLPVLTPIGLDPAHPFPRVLNKSLNFVVELEGRDAFGRQAVMGIVQAPRALPRVVQMPQALSGFEHGFVLLSSFMQRFVGELFPQLVVKSCNQFRITRNSELFVDEDEITNLRVALQGELPARHLGNAVRLEVSADTPQHIVRRLLEESGLGEKDCYRVIGSVNLVRLMQIPDLVDRPDLKFTPFTASIPPAIANATTMFDAIDEGDILLHHPYESFQPVLELLQQAARDPSVVAIKQTIYRTGTDSPLMDALMEAARNGKEVTVVVELLARFDEETNINWASQLEAVGAHVVYGVVGHKCHAKMMLIVRRVMQGGKATLRRYVHLGTGNYHPRTARLYTDFGLMTADQKICEDVHHVFQQLTGIGGELALHELWQSPFTLHPRIIESIRTEIDNARAGKRARIVAKMNALLEPSVIAALYEASQAGVKVDLIVRGVCALKPGVPGLSENITVRSIVGRFLEHHRIYYFHADGAEHVYLSSADWMDRNLFRRVEVAFPIRERKLKRRVIAEGLSVCLGDNQSAWQMQSDGHYRRRRAGKTVRNAQLGLLAKFCS.

Asn-45 serves as a coordination point for ATP. Residues Arg-375 and Arg-405 each contribute to the Mg(2+) site. His-435 functions as the Phosphohistidine intermediate in the catalytic mechanism. Positions 472, 568, and 596 each coordinate ATP.

This sequence belongs to the polyphosphate kinase 1 (PPK1) family. Mg(2+) serves as cofactor. In terms of processing, an intermediate of this reaction is the autophosphorylated ppk in which a phosphate is covalently linked to a histidine residue through a N-P bond.

It catalyses the reaction [phosphate](n) + ATP = [phosphate](n+1) + ADP. Catalyzes the reversible transfer of the terminal phosphate of ATP to form a long-chain polyphosphate (polyP). The sequence is that of Polyphosphate kinase from Burkholderia multivorans (strain ATCC 17616 / 249).